Consider the following 93-residue polypeptide: Co-chaperonin GroES (93 aa).

Belongs to the GroES chaperonin family. As to quaternary structure, heptamer of 7 subunits arranged in a ring. Interacts with the chaperonin GroEL.

Its subcellular location is the cytoplasm. Functionally, together with the chaperonin GroEL, plays an essential role in assisting protein folding. The GroEL-GroES system forms a nano-cage that allows encapsulation of the non-native substrate proteins and provides a physical environment optimized to promote and accelerate protein folding. GroES binds to the apical surface of the GroEL ring, thereby capping the opening of the GroEL channel. This chain is Co-chaperonin GroES, found in Lacticaseibacillus paracasei (strain ATCC 334 / BCRC 17002 / CCUG 31169 / CIP 107868 / KCTC 3260 / NRRL B-441) (Lactobacillus paracasei).